A 362-amino-acid polypeptide reads, in one-letter code: Protein-arginine kinase (362 aa).

The region spanning 24–255 is the Phosphagen kinase C-terminal domain; sequence IVLSSRIRLA…QQLIAQERMA (232 aa). ATP-binding positions include 27–31, H92, R126, 177–181, and 208–213; these read SSRIR, RASVM, and RGTYGE. An RDXXRA motif of the pArg binding pocket involved in allosteric regulation motif is present at residues 338-343; it reads RDVRRA.

This sequence belongs to the ATP:guanido phosphotransferase family.

The catalysed reaction is L-arginyl-[protein] + ATP = N(omega)-phospho-L-arginyl-[protein] + ADP + H(+). With respect to regulation, appears to be allosterically activated by the binding of pArg-containing polypeptides to the pArg-binding pocket localized in the C-terminal domain of McsB. Catalyzes the specific phosphorylation of arginine residues in a large number of proteins. Is part of the bacterial stress response system. Protein arginine phosphorylation has a physiologically important role and is involved in the regulation of many critical cellular processes, such as protein homeostasis, motility, competence, and stringent and stress responses, by regulating gene expression and protein activity. This Geobacillus sp. (strain WCH70) protein is Protein-arginine kinase.